The following is a 257-amino-acid chain: Pyridoxine 5'-phosphate synthase (257 aa).

N16 provides a ligand contact to 3-amino-2-oxopropyl phosphate. 18-19 (DH) lines the 1-deoxy-D-xylulose 5-phosphate pocket. A 3-amino-2-oxopropyl phosphate-binding site is contributed by R27. H52 acts as the Proton acceptor in catalysis. 1-deoxy-D-xylulose 5-phosphate contacts are provided by R54 and H59. The active-site Proton acceptor is the E79. Residue T109 participates in 1-deoxy-D-xylulose 5-phosphate binding. The Proton donor role is filled by H200. Residues G201 and 222 to 223 (GH) each bind 3-amino-2-oxopropyl phosphate.

The protein belongs to the PNP synthase family. Homooctamer; tetramer of dimers.

The protein resides in the cytoplasm. It carries out the reaction 3-amino-2-oxopropyl phosphate + 1-deoxy-D-xylulose 5-phosphate = pyridoxine 5'-phosphate + phosphate + 2 H2O + H(+). It functions in the pathway cofactor biosynthesis; pyridoxine 5'-phosphate biosynthesis; pyridoxine 5'-phosphate from D-erythrose 4-phosphate: step 5/5. Functionally, catalyzes the complicated ring closure reaction between the two acyclic compounds 1-deoxy-D-xylulose-5-phosphate (DXP) and 3-amino-2-oxopropyl phosphate (1-amino-acetone-3-phosphate or AAP) to form pyridoxine 5'-phosphate (PNP) and inorganic phosphate. The sequence is that of Pyridoxine 5'-phosphate synthase from Burkholderia pseudomallei (strain K96243).